The chain runs to 226 residues: MTLTWQGDPIPEELYKMLSGHSIRSFDDLQRLLQGDSGKEDGAELDLNMTRSHSGGELESLARGKRSLGSLSVAEPAMIAECKTRTEVFEISRRLIDRTNANFLVWPPCVEVQRCSGCCNNRNVQCRPTQVQLRPVQVRKIEIVRKKPIFKKATVTLEDHLACKCEIVAAARAVTRSPGTSQEQRAKTTQSRVTIRTVRVRRPPKGKHRKCKHTHDKTALKETLGA.

A compositionally biased stretch (basic residues) spans 201–215; the sequence is RRPPKGKHRKCKHTH. Residues 201–226 are disordered; sequence RRPPKGKHRKCKHTHDKTALKETLGA.

Belongs to the PDGF/VEGF growth factor family.

In Woolly monkey sarcoma virus (WMSV), this protein is PDGF-related-transforming protein sis (V-SIS).